We begin with the raw amino-acid sequence, 430 residues long: Adenylosuccinate synthetase (430 aa).

GTP-binding positions include 17–23 and 45–47; these read GDEGKGK and GHT. The active-site Proton acceptor is Asp-18. Residues Asp-18 and Gly-45 each contribute to the Mg(2+) site. IMP contacts are provided by residues 18–21, 43–46, Thr-139, Arg-153, Asn-229, Thr-244, and Arg-308; these read DEGK and NAGH. The active-site Proton donor is the His-46. 304–310 is a substrate binding site; it reads TVTGRRR. Residues Arg-310, 336 to 338, and 418 to 420 each bind GTP; these read KLD and GVG.

Belongs to the adenylosuccinate synthetase family. As to quaternary structure, homodimer. It depends on Mg(2+) as a cofactor.

Its subcellular location is the cytoplasm. The catalysed reaction is IMP + L-aspartate + GTP = N(6)-(1,2-dicarboxyethyl)-AMP + GDP + phosphate + 2 H(+). Its pathway is purine metabolism; AMP biosynthesis via de novo pathway; AMP from IMP: step 1/2. Plays an important role in the de novo pathway and in the salvage pathway of purine nucleotide biosynthesis. Catalyzes the first committed step in the biosynthesis of AMP from IMP. This Cryptococcus neoformans var. neoformans serotype D (strain B-3501A) (Filobasidiella neoformans) protein is Adenylosuccinate synthetase.